Here is a 667-residue protein sequence, read N- to C-terminus: Probable endo-1,3(4)-beta-glucanase AFLA_105200 (667 aa).

Residues Met-1–Ala-24 form the signal peptide. The GH16 domain occupies Asp-25 to Gly-288. Residue Asn-63 is glycosylated (N-linked (GlcNAc...) asparagine). Glu-144 acts as the Nucleophile in catalysis. Glu-149 (proton donor) is an active-site residue. Composition is skewed to polar residues over residues Val-354–Leu-363 and Ala-379–Val-394. Disordered stretches follow at residues Val-354–Val-427 and Gly-448–Ser-646. Low complexity-rich tracts occupy residues Ala-395–Val-427, Gly-448–Pro-483, and Ala-574–Ala-622. Residues Pro-623 to Glu-637 show a composition bias toward polar residues. Residue Gly-644 is the site of GPI-anchor amidated glycine attachment. Residues Ala-645–Ala-667 constitute a propeptide, removed in mature form.

It belongs to the glycosyl hydrolase 16 family.

The protein localises to the cell membrane. It carries out the reaction Endohydrolysis of (1-&gt;3)- or (1-&gt;4)-linkages in beta-D-glucans when the glucose residue whose reducing group is involved in the linkage to be hydrolyzed is itself substituted at C-3.. In terms of biological role, mixed-linked glucanase involved in the degradation of complex natural cellulosic substrates. This chain is Probable endo-1,3(4)-beta-glucanase AFLA_105200, found in Aspergillus flavus (strain ATCC 200026 / FGSC A1120 / IAM 13836 / NRRL 3357 / JCM 12722 / SRRC 167).